The chain runs to 390 residues: Pyruvate dehydrogenase E1 component subunit alpha, somatic form, mitochondrial (390 aa).

The transit peptide at methionine 1–asparagine 29 directs the protein to the mitochondrion. Lysine 63 is modified (N6-acetyllysine; alternate). The residue at position 63 (lysine 63) is an N6-succinyllysine; alternate. Pyruvate contacts are provided by histidine 92, tyrosine 118, arginine 119, alanine 157, glycine 165, valine 167, aspartate 196, glycine 197, alanine 198, asparagine 225, and tyrosine 227. 2 residues coordinate thiamine diphosphate: tyrosine 118 and arginine 119. Residues glycine 165, valine 167, aspartate 196, glycine 197, alanine 198, and asparagine 225 each contribute to the thiamine diphosphate site. Aspartate 196 is a binding site for Mg(2+). Asparagine 225 and tyrosine 227 together coordinate Mg(2+). The residue at position 232 (serine 232) is a Phosphoserine; by PDK1. At lysine 244 the chain carries N6-acetyllysine; alternate. Lysine 244 bears the N6-succinyllysine; alternate mark. Position 277 is an N6-succinyllysine (lysine 277). Histidine 292 is a thiamine diphosphate binding site. A Phosphoserine; by PDK1, PDK2, PDK3 and PDK4 modification is found at serine 293. Serine 295 carries the post-translational modification Phosphoserine. A Phosphoserine; by PDK1, PDK2, PDK3 and PDK4 modification is found at serine 300. Tyrosine 301 is subject to Phosphotyrosine. Lysine 313 bears the N6-acetyllysine; alternate mark. Lysine 313 bears the N6-succinyllysine; alternate mark. Residues lysine 321 and lysine 336 each carry the N6-acetyllysine modification. Lysine 385 bears the N6-succinyllysine mark.

As to quaternary structure, heterotetramer of two PDHA1 and two PDHB subunits. The heterotetramer interacts with DLAT, and is part of the multimeric pyruvate dehydrogenase complex that contains multiple copies of pyruvate dehydrogenase (E1), dihydrolipoamide acetyltransferase (DLAT, E2) and lipoamide dehydrogenase (DLD, E3). These subunits are bound to an inner core composed of about 48 DLAT and 12 PDHX molecules. The cofactor is thiamine diphosphate. Mg(2+) is required as a cofactor. Phosphorylation at Ser-232, Ser-293 and Ser-300 by PDK family kinases inactivates the enzyme; for this phosphorylation at a single site is sufficient. Phosphorylation at Ser-293 interferes with access to active site, and thereby inactivates the enzyme. Dephosphorylation at all three sites, i.e. at Ser-232, Ser-293 and Ser-300, is required for reactivation. Post-translationally, acetylation alters the phosphorylation pattern. Deacetylated by SIRT3.

Its subcellular location is the mitochondrion matrix. The catalysed reaction is N(6)-[(R)-lipoyl]-L-lysyl-[protein] + pyruvate + H(+) = N(6)-[(R)-S(8)-acetyldihydrolipoyl]-L-lysyl-[protein] + CO2. Its activity is regulated as follows. Pyruvate dehydrogenase activity is inhibited by phosphorylation of PDHA1; it is reactivated by dephosphorylation. Its function is as follows. The pyruvate dehydrogenase complex catalyzes the overall conversion of pyruvate to acetyl-CoA and CO(2), and thereby links the glycolytic pathway to the tricarboxylic cycle. This is Pyruvate dehydrogenase E1 component subunit alpha, somatic form, mitochondrial (PDHA1) from Pan troglodytes (Chimpanzee).